Consider the following 342-residue polypeptide: tRNA dimethylallyltransferase (342 aa).

The interval 1–30 (MSANGPAAEPADGGRAVPAGGGEAVPAGGG) is disordered. The span at 19–30 (AGGGEAVPAGGG) shows a compositional bias: gly residues. 49-56 (GPTAAGKS) serves as a coordination point for ATP. 51 to 56 (TAAGKS) is a binding site for substrate. Residues 74-77 (DSMQ) are interaction with substrate tRNA.

Belongs to the IPP transferase family. Monomer. It depends on Mg(2+) as a cofactor.

The enzyme catalyses adenosine(37) in tRNA + dimethylallyl diphosphate = N(6)-dimethylallyladenosine(37) in tRNA + diphosphate. Catalyzes the transfer of a dimethylallyl group onto the adenine at position 37 in tRNAs that read codons beginning with uridine, leading to the formation of N6-(dimethylallyl)adenosine (i(6)A). The polypeptide is tRNA dimethylallyltransferase (Salinispora arenicola (strain CNS-205)).